A 362-amino-acid chain; its full sequence is Histidinol-phosphate aminotransferase (362 aa).

K210 is subject to N6-(pyridoxal phosphate)lysine.

The protein belongs to the class-II pyridoxal-phosphate-dependent aminotransferase family. Histidinol-phosphate aminotransferase subfamily. As to quaternary structure, homodimer. The cofactor is pyridoxal 5'-phosphate.

The catalysed reaction is L-histidinol phosphate + 2-oxoglutarate = 3-(imidazol-4-yl)-2-oxopropyl phosphate + L-glutamate. The protein operates within amino-acid biosynthesis; L-histidine biosynthesis; L-histidine from 5-phospho-alpha-D-ribose 1-diphosphate: step 7/9. The polypeptide is Histidinol-phosphate aminotransferase (Rhodopirellula baltica (strain DSM 10527 / NCIMB 13988 / SH1)).